Here is a 61-residue protein sequence, read N- to C-terminus: Small ribosomal subunit protein uS14B (61 aa).

Zn(2+) contacts are provided by cysteine 24, cysteine 27, cysteine 40, and cysteine 43.

This sequence belongs to the universal ribosomal protein uS14 family. Zinc-binding uS14 subfamily. Part of the 30S ribosomal subunit. Contacts proteins S3 and S10. The cofactor is Zn(2+).

Its function is as follows. Binds 16S rRNA, required for the assembly of 30S particles and may also be responsible for determining the conformation of the 16S rRNA at the A site. The polypeptide is Small ribosomal subunit protein uS14B (Streptococcus pyogenes serotype M6 (strain ATCC BAA-946 / MGAS10394)).